Reading from the N-terminus, the 161-residue chain is MQDAITAVINASDVQGKYLDTAAMEKLKAYFATGELRVRAASVISANAANIVKEAVAKSLLYSDITRPGGNMYTTRRYAACIRDLDYYLRYATYAMLAGDPSILDERVLNGLKETYNSLGVPIAATVQAIQAMKEVTASLVGADAGKEMGIYFDYICSGLS.

N4-methylasparagine is present on N71. C81 contributes to the (2R,3E)-phycocyanobilin binding site.

It belongs to the phycobiliprotein family. Heterodimer of an alpha and a beta chain. In terms of processing, contains one covalently linked phycocyanobilin chromophore.

The protein localises to the cellular thylakoid membrane. Light-harvesting photosynthetic bile pigment-protein from the phycobiliprotein complex. Allophycocyanin has a maximum absorption at approximately 650 nanometers. The protein is Allophycocyanin beta chain (apcB) of Thermosynechococcus vestitus (strain NIES-2133 / IAM M-273 / BP-1).